Here is a 399-residue protein sequence, read N- to C-terminus: Putative glutamate--cysteine ligase 2 (399 aa).

The tract at residues 377–399 (PAVGSSHGRTDPSRNGGPSHAGA) is disordered.

Belongs to the glutamate--cysteine ligase type 2 family. YbdK subfamily.

It catalyses the reaction L-cysteine + L-glutamate + ATP = gamma-L-glutamyl-L-cysteine + ADP + phosphate + H(+). ATP-dependent carboxylate-amine ligase which exhibits weak glutamate--cysteine ligase activity. This chain is Putative glutamate--cysteine ligase 2, found in Thermobifida fusca (strain YX).